The following is a 134-amino-acid chain: Orexigenic neuropeptide QRFP (134 aa).

An N-terminal signal peptide occupies residues 1–18; it reads MRSPYSLPYLLFLPLGAC. Residues 19 to 88 constitute a propeptide that is removed on maturation; that stretch reads FPVLDTEEPV…RAGFQLRLGR (70 aa). Phe131 carries the post-translational modification Phenylalanine amide.

The protein belongs to the RFamide neuropeptide family. As to quaternary structure, ligand for the G-protein coupled receptor QRFPR/GPR103. Expressed in the hypothalamus.

The protein resides in the secreted. In terms of biological role, stimulates feeding behavior, metabolic rate and locomotor activity and increases blood pressure. May have orexigenic activity. May promote aldosterone secretion by the adrenal gland. The sequence is that of Orexigenic neuropeptide QRFP from Bos taurus (Bovine).